Here is a 222-residue protein sequence, read N- to C-terminus: Histidine biosynthesis bifunctional protein HisIE (222 aa).

The segment at 1 to 128 is phosphoribosyl-AMP cyclohydrolase; sequence MQPLSPAFID…SNALSPPADA (128 aa). Residues 129 to 222 form a phosphoribosyl-ATP pyrophosphohydrolase region; it reads CTELFRVIES…AARRGAPRRH (94 aa).

It in the N-terminal section; belongs to the PRA-CH family. The protein in the C-terminal section; belongs to the PRA-PH family.

Its subcellular location is the cytoplasm. It catalyses the reaction 1-(5-phospho-beta-D-ribosyl)-ATP + H2O = 1-(5-phospho-beta-D-ribosyl)-5'-AMP + diphosphate + H(+). The enzyme catalyses 1-(5-phospho-beta-D-ribosyl)-5'-AMP + H2O = 1-(5-phospho-beta-D-ribosyl)-5-[(5-phospho-beta-D-ribosylamino)methylideneamino]imidazole-4-carboxamide. Its pathway is amino-acid biosynthesis; L-histidine biosynthesis; L-histidine from 5-phospho-alpha-D-ribose 1-diphosphate: step 2/9. It functions in the pathway amino-acid biosynthesis; L-histidine biosynthesis; L-histidine from 5-phospho-alpha-D-ribose 1-diphosphate: step 3/9. The protein is Histidine biosynthesis bifunctional protein HisIE of Parasynechococcus marenigrum (strain WH8102).